Consider the following 236-residue polypeptide: DNA repair protein RecO (236 aa).

It belongs to the RecO family.

Functionally, involved in DNA repair and RecF pathway recombination. This Stutzerimonas stutzeri (strain A1501) (Pseudomonas stutzeri) protein is DNA repair protein RecO.